The following is a 921-amino-acid chain: Leucine--tRNA ligase (921 aa).

The 'HIGH' region motif lies at 41-52 (PYPSGSGLHVGH). A 'KMSKS' region motif is present at residues 695-699 (KMSKS). Residue Lys698 participates in ATP binding.

It belongs to the class-I aminoacyl-tRNA synthetase family.

The protein localises to the cytoplasm. It catalyses the reaction tRNA(Leu) + L-leucine + ATP = L-leucyl-tRNA(Leu) + AMP + diphosphate. The sequence is that of Leucine--tRNA ligase from Cytophaga hutchinsonii (strain ATCC 33406 / DSM 1761 / CIP 103989 / NBRC 15051 / NCIMB 9469 / D465).